We begin with the raw amino-acid sequence, 61 residues long: Large ribosomal subunit protein uL30 (61 aa).

It belongs to the universal ribosomal protein uL30 family. In terms of assembly, part of the 50S ribosomal subunit.

The chain is Large ribosomal subunit protein uL30 from Bordetella avium (strain 197N).